Reading from the N-terminus, the 605-residue chain is UvrABC system protein C (605 aa).

The GIY-YIG domain occupies 15–92 (GLPGCYLMKN…IQKHQPYFNI (78 aa)). The UVR domain occupies 197 to 232 (GHAKKDLTQRMEKAAADMAYERAGDLRDQIRYIEAT).

This sequence belongs to the UvrC family. In terms of assembly, interacts with UvrB in an incision complex.

The protein resides in the cytoplasm. The UvrABC repair system catalyzes the recognition and processing of DNA lesions. UvrC both incises the 5' and 3' sides of the lesion. The N-terminal half is responsible for the 3' incision and the C-terminal half is responsible for the 5' incision. The sequence is that of UvrABC system protein C from Levilactobacillus brevis (strain ATCC 367 / BCRC 12310 / CIP 105137 / JCM 1170 / LMG 11437 / NCIMB 947 / NCTC 947) (Lactobacillus brevis).